The primary structure comprises 141 residues: Hemoglobin subunit alpha (141 aa).

The 141-residue stretch at 1-141 (VLSEEDKSHV…VSAMLTSKYR (141 aa)) folds into the Globin domain. His58 is an O2 binding site. Residue His87 coordinates heme b.

It belongs to the globin family. As to quaternary structure, heterotetramer of two alpha chains and two beta chains. As to expression, red blood cells.

Involved in oxygen transport from the lung to the various peripheral tissues. In Caiman crocodilus (Spectacled caiman), this protein is Hemoglobin subunit alpha (HBA).